A 231-amino-acid polypeptide reads, in one-letter code: Orotidine 5'-phosphate decarboxylase (231 aa).

Residues Asp-11, Lys-33, Asp-60 to Thr-69, Thr-120, Arg-181, Gln-190, Gly-210, and Arg-211 contribute to the substrate site. Lys-62 serves as the catalytic Proton donor.

The protein belongs to the OMP decarboxylase family. Type 1 subfamily. As to quaternary structure, homodimer.

It carries out the reaction orotidine 5'-phosphate + H(+) = UMP + CO2. The protein operates within pyrimidine metabolism; UMP biosynthesis via de novo pathway; UMP from orotate: step 2/2. Catalyzes the decarboxylation of orotidine 5'-monophosphate (OMP) to uridine 5'-monophosphate (UMP). This Vibrio cholerae serotype O1 (strain ATCC 39541 / Classical Ogawa 395 / O395) protein is Orotidine 5'-phosphate decarboxylase.